The sequence spans 352 residues: C5a anaphylatoxin chemotactic receptor 1 (352 aa).

The Extracellular portion of the chain corresponds to 1-38; it reads MASMNFSPPEYPDYGTATLDPNIFVDESLNTPKLSVPD. Sulfotyrosine occurs at positions 11 and 14. A helical membrane pass occupies residues 39–65; the sequence is MIALVIFVMVFLVGVPGNFLVVWVTGF. Topologically, residues 66–70 are cytoplasmic; the sequence is EVRRT. A helical membrane pass occupies residues 71–94; that stretch reads INAIWFLNLAVADLLSCLALPILF. Residues 95–111 lie on the Extracellular side of the membrane; it reads SSIVQQGYWPFGNAACR. C110 and C189 are disulfide-bonded. A helical transmembrane segment spans residues 112–133; it reads ILPSLILLNMYASILLLTTISA. Residues 134 to 154 lie on the Cytoplasmic side of the membrane; that stretch reads DRFVLVFNPIWCQNYRGPQLA. Residues 155–175 traverse the membrane as a helical segment; it reads WAACSVAWAVALLLTVPSFIF. Residues 176–202 lie on the Extracellular side of the membrane; that stretch reads RGVHTEYFPFWMTCGVDYSGVGVLVER. The chain crosses the membrane as a helical span at residues 203-228; sequence GVAILRLLMGFLGPLVILSICYTFLL. Topologically, residues 229 to 244 are cytoplasmic; that stretch reads IRTWSRKATRSTKTLK. Residues 245 to 267 traverse the membrane as a helical segment; sequence VVVAVVVSFFVLWLPYQVTGMMM. At 268–284 the chain is on the extracellular side; it reads ALFYKHSESFRRVSRLD. The helical transmembrane segment at 285–305 threads the bilayer; sequence SLCVAVAYINCCINPIIYVLA. The Cytoplasmic segment spans residues 306 to 352; that stretch reads AQGFHSRFLKSLPARLRQVLAEESVGRDSKSITLSTVDTPAQKSQGV. Phosphoserine is present on residues S316, S329, S334, S336, and S340.

This sequence belongs to the G-protein coupled receptor 1 family. In terms of assembly, homodimer. May also form higher-order oligomers. Interacts (when phosphorylated) with ARRB1 and ARRB2; the interaction is associated with internalization of C5aR. In terms of processing, sulfation plays a critical role in the association of C5aR with C5a, but no significant role in the ability of the receptor to transduce a signal and mobilize calcium in response to a small peptide agonist. Phosphorylated on serine residues in response to C5a binding, resulting in internalization of the receptor and short-term desensitization to C5a.

The protein localises to the cell membrane. Its subcellular location is the cytoplasmic vesicle. In terms of biological role, receptor for the chemotactic and inflammatory peptide anaphylatoxin C5a. The ligand interacts with at least two sites on the receptor: a high-affinity site on the extracellular N-terminus, and a second site in the transmembrane region which activates downstream signaling events. Receptor activation stimulates chemotaxis, granule enzyme release, intracellular calcium release and superoxide anion production. In Canis lupus familiaris (Dog), this protein is C5a anaphylatoxin chemotactic receptor 1 (C5AR1).